We begin with the raw amino-acid sequence, 182 residues long: Protein canopy homolog 2 (182 aa).

An N-terminal signal peptide occupies residues 1–20 (MKGWGWLALLLGALLGTAWA). Residues 24–175 (QDLHCGACRA…KRTDLCDHAL (152 aa)) enclose the Saposin B-type domain. 3 disulfide bridges follow: cysteine 28–cysteine 171, cysteine 31–cysteine 164, and cysteine 86–cysteine 137. Serine 115 carries the phosphoserine modification. The Prevents secretion from ER motif lies at 179–182 (HDEL).

The protein belongs to the canopy family. In terms of assembly, interacts with MYLIP/MIR. Expressed in different tissues. Highest levels are detected in adult placenta, liver and pancreas.

The protein resides in the endoplasmic reticulum. Positive regulator of neurite outgrowth by stabilizing myosin regulatory light chain (MRLC). It prevents MIR-mediated MRLC ubiquitination and its subsequent proteasomal degradation. The protein is Protein canopy homolog 2 (CNPY2) of Homo sapiens (Human).